Consider the following 420-residue polypeptide: CinA-like protein (420 aa).

It belongs to the CinA family.

This Chloroherpeton thalassium (strain ATCC 35110 / GB-78) protein is CinA-like protein.